Consider the following 378-residue polypeptide: Ribosomal RNA large subunit methyltransferase G (378 aa).

This sequence belongs to the methyltransferase superfamily. RlmG family.

The protein resides in the cytoplasm. It carries out the reaction guanosine(1835) in 23S rRNA + S-adenosyl-L-methionine = N(2)-methylguanosine(1835) in 23S rRNA + S-adenosyl-L-homocysteine + H(+). Specifically methylates the guanine in position 1835 (m2G1835) of 23S rRNA. The sequence is that of Ribosomal RNA large subunit methyltransferase G from Salmonella arizonae (strain ATCC BAA-731 / CDC346-86 / RSK2980).